Reading from the N-terminus, the 143-residue chain is Transcriptional regulator MraZ (143 aa).

SpoVT-AbrB domains follow at residues threonine 5–glutamate 47 and alanine 76–alanine 119.

It belongs to the MraZ family. In terms of assembly, forms oligomers.

It is found in the cytoplasm. Its subcellular location is the nucleoid. The chain is Transcriptional regulator MraZ from Corynebacterium diphtheriae (strain ATCC 700971 / NCTC 13129 / Biotype gravis).